Consider the following 181-residue polypeptide: Cell division protein SepF (181 aa).

Acidic residues predominate over residues 18 to 27 (EDYLDDDDYD). The interval 18-42 (EDYLDDDDYDDGRAVGHDDRRAMHE) is disordered. The segment covering 28–42 (DGRAVGHDDRRAMHE) has biased composition (basic and acidic residues).

This sequence belongs to the SepF family. In terms of assembly, homodimer. Interacts with FtsZ.

The protein resides in the cytoplasm. Functionally, cell division protein that is part of the divisome complex and is recruited early to the Z-ring. Probably stimulates Z-ring formation, perhaps through the cross-linking of FtsZ protofilaments. Its function overlaps with FtsA. The protein is Cell division protein SepF of Frankia alni (strain DSM 45986 / CECT 9034 / ACN14a).